The following is a 259-amino-acid chain: Methyltransferase afvD (259 aa).

Belongs to the class I-like SAM-binding methyltransferase superfamily.

The protein operates within secondary metabolite biosynthesis. Its function is as follows. Methyltransferase; part of the gene cluster that mediates the biosynthesis of aflavarin, a bicoumarin that exhibits anti-insectan activity against the fungivorous beetle C.hemipterus. In Aspergillus flavus (strain ATCC 200026 / FGSC A1120 / IAM 13836 / NRRL 3357 / JCM 12722 / SRRC 167), this protein is Methyltransferase afvD.